Consider the following 266-residue polypeptide: Protein crossbronx-like (266 aa).

The 164-residue stretch at 15 to 178 (KQGYHILAEY…VQEQAILSRN (164 aa)) folds into the UBC core domain. The tract at residues 234–266 (SSRQLDEEEANQVEKLHRGRIPEHQREESEVSL) is disordered. Residues 245 to 266 (QVEKLHRGRIPEHQREESEVSL) are compositionally biased toward basic and acidic residues.

Belongs to the ubiquitin-conjugating enzyme family. FTS subfamily.

This is Protein crossbronx-like from Drosophila melanogaster (Fruit fly).